We begin with the raw amino-acid sequence, 288 residues long: CUF1-dependent copper transporter 1 (288 aa).

Asn18 carries N-linked (GlcNAc...) asparagine glycosylation. The helical transmembrane segment at 42-62 (MPSSAGATVGVCIGLFILAIF) threads the bilayer. Disordered regions lie at residues 106–125 (PVLF…YNPL) and 154–180 (RESQ…GSGV). A compositionally biased stretch (polar residues) spans 158 to 167 (EGSSAPSYAH). A compositionally biased stretch (low complexity) spans 168 to 177 (SQQGQAQAQG). A helical transmembrane segment spans residues 251–271 (LLMLVVMTFNIWWMISVVIGC).

The protein belongs to the copper transporter (Ctr) (TC 1.A.56) family. SLC31A subfamily. As to quaternary structure, interacts with the copper acquisition factor BIM1.

The protein resides in the cell membrane. In terms of biological role, high affinity copper transporter involved in Cu(+) import into the cell upon copper-limitating conditions. Functions with BIM1 and probably also FRE4 and FRE7, where FRE4 and FRE7 metalloreductases liberate the Cu(2+) bound to the BIM1 copper-binding site for subsequent import of Cu(+) into the cell by CTR1, via the reduction of BIM1-bound Cu(2+) to Cu(+) to reduce binding affinity for BIM1 but increase affinity for CTR1. The BIM1-CTR1 pathway for copper uptake plays a key role in colonization in the brain where copper amounts are low and thus in cryptococcal meningitis. This chain is CUF1-dependent copper transporter 1, found in Cryptococcus neoformans var. grubii serotype A (strain H99 / ATCC 208821 / CBS 10515 / FGSC 9487) (Filobasidiella neoformans var. grubii).